A 131-amino-acid polypeptide reads, in one-letter code: UPF0102 protein YraN (131 aa).

This sequence belongs to the UPF0102 family.

This Salmonella typhimurium (strain LT2 / SGSC1412 / ATCC 700720) protein is UPF0102 protein YraN.